The chain runs to 224 residues: MSERTASQPNTDRSRRRLRVVLDVALSDAAACPLEEIDGEVTAVRHQYTGDDCHADVTVAPACPDDDRSDVMHVATQTTDSCLCCVFSDHGCVPQITAVAADTITVETYLADRTTLTDLVADLKAVANTVSLTHLTRLAADDQSGDSHTHVTLDLFKLTDKQREAAAAAVAKGYYATPRGADLSDLATALGISKSAVSQRLSAVESKLATSAFTEAQQSAGSAP.

The 52-residue stretch at 158–209 folds into the HTH bat-type domain; it reads LTDKQREAAAAAVAKGYYATPRGADLSDLATALGISKSAVSQRLSAVESKLA.

Its function is as follows. Involved in activating dmsEABCD gene expression related to dimethyl sulfoxide (DMSO) reductase. Required for anaerobic respiration on dimethyl sulfoxide (DMSO) and trimethylamine N-oxide (TMAO). This Halobacterium salinarum (strain ATCC 700922 / JCM 11081 / NRC-1) (Halobacterium halobium) protein is Dimethyl sulfoxide reductase transcriptional activator (dmsR).